The chain runs to 420 residues: D-tagatose-1,6-bisphosphate aldolase subunit GatZ (420 aa).

The protein belongs to the GatZ/KbaZ family. GatZ subfamily. Forms a complex with GatY.

The protein operates within carbohydrate metabolism; D-tagatose 6-phosphate degradation; D-glyceraldehyde 3-phosphate and glycerone phosphate from D-tagatose 6-phosphate: step 2/2. In terms of biological role, component of the tagatose-1,6-bisphosphate aldolase GatYZ that is required for full activity and stability of the Y subunit. Could have a chaperone-like function for the proper and stable folding of GatY. When expressed alone, GatZ does not show any aldolase activity. Is involved in the catabolism of galactitol. The sequence is that of D-tagatose-1,6-bisphosphate aldolase subunit GatZ from Escherichia coli O139:H28 (strain E24377A / ETEC).